Reading from the N-terminus, the 653-residue chain is DNA mismatch repair protein MutL (653 aa).

The disordered stretch occupies residues 375–425; it reads QNTPDYPRKAPRDNDRDESDNPQVRERAVSNPWVASPKTASTGKERYGSAS. Over residues 380 to 389 the composition is skewed to basic and acidic residues; it reads YPRKAPRDND.

This sequence belongs to the DNA mismatch repair MutL/HexB family.

This protein is involved in the repair of mismatches in DNA. It is required for dam-dependent methyl-directed DNA mismatch repair. May act as a 'molecular matchmaker', a protein that promotes the formation of a stable complex between two or more DNA-binding proteins in an ATP-dependent manner without itself being part of a final effector complex. This is DNA mismatch repair protein MutL from Vibrio cholerae serotype O1 (strain ATCC 39541 / Classical Ogawa 395 / O395).